The sequence spans 140 residues: Large ribosomal subunit protein uL11 (140 aa).

It belongs to the universal ribosomal protein uL11 family. As to quaternary structure, part of the ribosomal stalk of the 50S ribosomal subunit. Interacts with L10 and the large rRNA to form the base of the stalk. L10 forms an elongated spine to which L12 dimers bind in a sequential fashion forming a multimeric L10(L12)X complex. One or more lysine residues are methylated.

In terms of biological role, forms part of the ribosomal stalk which helps the ribosome interact with GTP-bound translation factors. This is Large ribosomal subunit protein uL11 from Nitratidesulfovibrio vulgaris (strain ATCC 29579 / DSM 644 / CCUG 34227 / NCIMB 8303 / VKM B-1760 / Hildenborough) (Desulfovibrio vulgaris).